The sequence spans 259 residues: tRNA-cytidine(32) 2-sulfurtransferase (259 aa).

The PP-loop motif motif lies at 40–45 (SGGKDS). Positions 114, 117, and 205 each coordinate [4Fe-4S] cluster.

The protein belongs to the TtcA family. In terms of assembly, homodimer. Mg(2+) is required as a cofactor. It depends on [4Fe-4S] cluster as a cofactor.

Its subcellular location is the cytoplasm. The enzyme catalyses cytidine(32) in tRNA + S-sulfanyl-L-cysteinyl-[cysteine desulfurase] + AH2 + ATP = 2-thiocytidine(32) in tRNA + L-cysteinyl-[cysteine desulfurase] + A + AMP + diphosphate + H(+). It participates in tRNA modification. Functionally, catalyzes the ATP-dependent 2-thiolation of cytidine in position 32 of tRNA, to form 2-thiocytidine (s(2)C32). The sulfur atoms are provided by the cysteine/cysteine desulfurase (IscS) system. In Bdellovibrio bacteriovorus (strain ATCC 15356 / DSM 50701 / NCIMB 9529 / HD100), this protein is tRNA-cytidine(32) 2-sulfurtransferase.